The following is an 86-amino-acid chain: Exodeoxyribonuclease 7 small subunit (86 aa).

The interval 64–86 (SNPETVQDKTDTDEPDSNEFSLT) is disordered.

Belongs to the XseB family. Heterooligomer composed of large and small subunits.

It localises to the cytoplasm. The catalysed reaction is Exonucleolytic cleavage in either 5'- to 3'- or 3'- to 5'-direction to yield nucleoside 5'-phosphates.. Bidirectionally degrades single-stranded DNA into large acid-insoluble oligonucleotides, which are then degraded further into small acid-soluble oligonucleotides. This Akkermansia muciniphila (strain ATCC BAA-835 / DSM 22959 / JCM 33894 / BCRC 81048 / CCUG 64013 / CIP 107961 / Muc) protein is Exodeoxyribonuclease 7 small subunit.